An 878-amino-acid polypeptide reads, in one-letter code: Staphylococcal nuclease domain-containing protein 1 (878 aa).

2 consecutive TNase-like domains span residues 3 to 142 and 167 to 312; these read QYVS…IWGP and KKLN…IWKN. Ser-316 is subject to Phosphoserine. TNase-like domains are found at residues 326–464 and 493–626; these read KDYS…MWSG and RKLS…MWHD. Residues 695–755 form the Tudor domain; that stretch reads KINVGMNVAA…SSLPDTYTKL (61 aa).

The protein localises to the cytoplasm. It localises to the cytosol. In Schizosaccharomyces pombe (strain 972 / ATCC 24843) (Fission yeast), this protein is Staphylococcal nuclease domain-containing protein 1.